Here is a 483-residue protein sequence, read N- to C-terminus: UDP-N-acetylmuramoyl-L-alanyl-D-glutamate--2,6-diaminopimelate ligase (483 aa).

Residue Ser-30 participates in UDP-N-acetyl-alpha-D-muramoyl-L-alanyl-D-glutamate binding. Gly-109–Thr-115 is an ATP binding site. UDP-N-acetyl-alpha-D-muramoyl-L-alanyl-D-glutamate contacts are provided by residues Thr-151–Thr-152, Ser-178, and Arg-186. Lys-218 is subject to N6-carboxylysine. Meso-2,6-diaminopimelate-binding positions include Arg-380, Asp-403–Arg-406, Gly-453, and Glu-457. The Meso-diaminopimelate recognition motif signature appears at Asp-403–Arg-406.

It belongs to the MurCDEF family. MurE subfamily. Mg(2+) serves as cofactor. In terms of processing, carboxylation is probably crucial for Mg(2+) binding and, consequently, for the gamma-phosphate positioning of ATP.

Its subcellular location is the cytoplasm. The catalysed reaction is UDP-N-acetyl-alpha-D-muramoyl-L-alanyl-D-glutamate + meso-2,6-diaminopimelate + ATP = UDP-N-acetyl-alpha-D-muramoyl-L-alanyl-gamma-D-glutamyl-meso-2,6-diaminopimelate + ADP + phosphate + H(+). Its pathway is cell wall biogenesis; peptidoglycan biosynthesis. Its function is as follows. Catalyzes the addition of meso-diaminopimelic acid to the nucleotide precursor UDP-N-acetylmuramoyl-L-alanyl-D-glutamate (UMAG) in the biosynthesis of bacterial cell-wall peptidoglycan. In Chlamydia abortus (strain DSM 27085 / S26/3) (Chlamydophila abortus), this protein is UDP-N-acetylmuramoyl-L-alanyl-D-glutamate--2,6-diaminopimelate ligase.